A 166-amino-acid polypeptide reads, in one-letter code: 2-C-methyl-D-erythritol 2,4-cyclodiphosphate synthase (166 aa).

Residues Asp11 and His13 each contribute to the a divalent metal cation site. 4-CDP-2-C-methyl-D-erythritol 2-phosphate is bound by residues 11–13 (DVH) and 40–41 (HS). His48 lines the a divalent metal cation pocket. 4-CDP-2-C-methyl-D-erythritol 2-phosphate-binding positions include 62-64 (DLG), 135-138 (TTSD), Phe142, and Arg145.

Belongs to the IspF family. As to quaternary structure, homotrimer. The cofactor is a divalent metal cation.

The catalysed reaction is 4-CDP-2-C-methyl-D-erythritol 2-phosphate = 2-C-methyl-D-erythritol 2,4-cyclic diphosphate + CMP. It participates in isoprenoid biosynthesis; isopentenyl diphosphate biosynthesis via DXP pathway; isopentenyl diphosphate from 1-deoxy-D-xylulose 5-phosphate: step 4/6. Functionally, involved in the biosynthesis of isopentenyl diphosphate (IPP) and dimethylallyl diphosphate (DMAPP), two major building blocks of isoprenoid compounds. Catalyzes the conversion of 4-diphosphocytidyl-2-C-methyl-D-erythritol 2-phosphate (CDP-ME2P) to 2-C-methyl-D-erythritol 2,4-cyclodiphosphate (ME-CPP) with a corresponding release of cytidine 5-monophosphate (CMP). The chain is 2-C-methyl-D-erythritol 2,4-cyclodiphosphate synthase from Pseudarthrobacter chlorophenolicus (strain ATCC 700700 / DSM 12829 / CIP 107037 / JCM 12360 / KCTC 9906 / NCIMB 13794 / A6) (Arthrobacter chlorophenolicus).